We begin with the raw amino-acid sequence, 284 residues long: Probable ADP-ribose 1''-phosphate phosphatase YML087W (284 aa).

The substrate site is built by Asp23, Gln55, Asn80, and Asp90. In terms of domain architecture, Macro spans 34–230 (ESIPHAYIQN…HISKELKNVL (197 aa)). Active-site residues include Asn80 and Asp90. Cys128 and Cys136 are disulfide-bonded. His145 is a catalytic residue. The substrate site is built by Thr148 and Thr195.

As to quaternary structure, homodimer.

It carries out the reaction ADP-alpha-D-ribose 1''-phosphate + H2O = ADP-D-ribose + phosphate. Functionally, highly specific phosphatase involved in the metabolism of ADP-ribose 1''-phosphate (Appr1p) which is produced as a consequence of tRNA splicing. + phosphate. The chain is Probable ADP-ribose 1''-phosphate phosphatase YML087W from Saccharomyces cerevisiae (strain ATCC 204508 / S288c) (Baker's yeast).